Reading from the N-terminus, the 206-residue chain is Large ribosomal subunit protein uL4 (206 aa).

The protein belongs to the universal ribosomal protein uL4 family. Part of the 50S ribosomal subunit.

In terms of biological role, one of the primary rRNA binding proteins, this protein initially binds near the 5'-end of the 23S rRNA. It is important during the early stages of 50S assembly. It makes multiple contacts with different domains of the 23S rRNA in the assembled 50S subunit and ribosome. Its function is as follows. Forms part of the polypeptide exit tunnel. The protein is Large ribosomal subunit protein uL4 of Desulfatibacillum aliphaticivorans.